Consider the following 120-residue polypeptide: Small ribosomal subunit protein uS13 (120 aa).

The tract at residues 96–120 (PCRGQRTRTNARTRKGPRKAIAGKK) is disordered.

It belongs to the universal ribosomal protein uS13 family. As to quaternary structure, part of the 30S ribosomal subunit. Forms a loose heterodimer with protein S19. Forms two bridges to the 50S subunit in the 70S ribosome.

Functionally, located at the top of the head of the 30S subunit, it contacts several helices of the 16S rRNA. In the 70S ribosome it contacts the 23S rRNA (bridge B1a) and protein L5 of the 50S subunit (bridge B1b), connecting the 2 subunits; these bridges are implicated in subunit movement. Contacts the tRNAs in the A and P-sites. The chain is Small ribosomal subunit protein uS13 from Neisseria gonorrhoeae (strain ATCC 700825 / FA 1090).